Consider the following 453-residue polypeptide: MTAAILADALTQKVHQTEIDKELQALKEQAMVSGTEDSILVNKRQGAADLLGSLRLPHKRDEEWQFTDLSELKAIDFVAAGKVSLDVAAAENFYLPEAHQSRLVFINGFFTPELSNTNDLPSAITCQSWTNLAAHQREQLANYLGQKTDGNEVFSNLNTAGMTDSAVVWIPANTELKSPIHLLFLTVVDPTPIMVQPRLLVVVENNAQVTIAESYGAISTNCTDRPQQQPYFNNIVSEIYLGENAQVTHIRNQRDSGDSFHIATTAIAQGKQSRYRLIDVNLGAKLSRHNLQMTQQEEATKTEFLALTILAGRQVSDTHSTIALNHPHGATNQLHKCIVDEYAQAVFSGKVLVPQAAQLTNAQQLNRNLVLSSKARINTKPELQITADNVKCSHGATISQLEADEVFYLRSRGLNDYDARHLLIDAFAGEILDQIPLASLQGRLRQCVSCRTI.

This sequence belongs to the iron-sulfur cluster assembly SufBD family.

The polypeptide is Iron-sulfur cluster assembly SufBD family protein slr0076 (Synechocystis sp. (strain ATCC 27184 / PCC 6803 / Kazusa)).